We begin with the raw amino-acid sequence, 387 residues long: 1-deoxy-D-xylulose 5-phosphate reductoisomerase (387 aa).

Positions 10, 11, 13, 38, and 122 each coordinate NADPH. Lys-123 is a binding site for 1-deoxy-D-xylulose 5-phosphate. Glu-124 is an NADPH binding site. A Mn(2+)-binding site is contributed by Asp-148. Positions 149, 150, 174, and 197 each coordinate 1-deoxy-D-xylulose 5-phosphate. Glu-150 is a Mn(2+) binding site. Residue Gly-203 coordinates NADPH. 1-deoxy-D-xylulose 5-phosphate-binding residues include Ser-210, Asn-215, Lys-216, and Glu-219. Position 219 (Glu-219) interacts with Mn(2+).

This sequence belongs to the DXR family. It depends on Mg(2+) as a cofactor. The cofactor is Mn(2+).

The catalysed reaction is 2-C-methyl-D-erythritol 4-phosphate + NADP(+) = 1-deoxy-D-xylulose 5-phosphate + NADPH + H(+). It functions in the pathway isoprenoid biosynthesis; isopentenyl diphosphate biosynthesis via DXP pathway; isopentenyl diphosphate from 1-deoxy-D-xylulose 5-phosphate: step 1/6. In terms of biological role, catalyzes the NADPH-dependent rearrangement and reduction of 1-deoxy-D-xylulose-5-phosphate (DXP) to 2-C-methyl-D-erythritol 4-phosphate (MEP). The polypeptide is 1-deoxy-D-xylulose 5-phosphate reductoisomerase (Ehrlichia canis (strain Jake)).